The primary structure comprises 335 residues: Methionine import ATP-binding protein MetN 1 (335 aa).

One can recognise an ABC transporter domain in the interval 2 to 242; the sequence is IEFQNVHKTY…PKHPTTKRFV (241 aa). Residue 38-45 coordinates ATP; it reads GHSGAGKS.

It belongs to the ABC transporter superfamily. Methionine importer (TC 3.A.1.24) family. As to quaternary structure, the complex is composed of two ATP-binding proteins (MetN), two transmembrane proteins (MetI) and a solute-binding protein (MetQ).

It is found in the cell inner membrane. It carries out the reaction L-methionine(out) + ATP + H2O = L-methionine(in) + ADP + phosphate + H(+). It catalyses the reaction D-methionine(out) + ATP + H2O = D-methionine(in) + ADP + phosphate + H(+). Part of the ABC transporter complex MetNIQ involved in methionine import. Responsible for energy coupling to the transport system. This chain is Methionine import ATP-binding protein MetN 1, found in Pseudomonas fluorescens (strain Pf0-1).